Consider the following 312-residue polypeptide: R2-like ligand binding oxidase (312 aa).

3 residues coordinate Mn(2+): glutamate 68, glutamate 101, and histidine 104. A cross-link (3-(O4'-tyrosyl)-valine (Val-Tyr)) is located at residues valine 71–tyrosine 162. Position 101 (glutamate 101) interacts with Fe cation. Residues glutamate 167, glutamate 202, and histidine 205 each coordinate Fe cation.

The protein belongs to the ribonucleoside diphosphate reductase small chain family. R2-like ligand binding oxidase subfamily. As to quaternary structure, homodimer. Fe cation serves as cofactor. The cofactor is Mn(2+).

Probable oxidase that might be involved in lipid metabolism. This chain is R2-like ligand binding oxidase, found in Mycobacterium sp. (strain KMS).